The chain runs to 488 residues: MLKVRFAPSPTGPLHIGGARSALFNYLLARKEDGVFIVRSEDTDLERSSRESEHNIMEALRWLNIQWDEGIEVGGDNGPYRQTERLALYQEYTDRLLASGDAYYCYCSEEELEQERQDLMAKGETPRYLGKCRHLSAAERQTYEAAGRKPVVRFRVPEGRQILINDRVRGEVVFDSDGIGDYVIVKSDGIPTYNFAVVIDDTTMNITHVIRGEEHLSNTPRQVLIYQALGLPTPEFAHISLILNTEGKKMSKRDGDTAVIDYQAKGYLPEAVVNFIALMGWSPPGEEEFFTLEEMTQAFSLERVSKSPAVFDLNKLNYMNAHYIKQADPERLTDLAVPYLREMGAIPQGTLSEEERAWVTHYVQAIINHLSYMAQVKDFVHYVQGGEAPTPEGEALEILQGEQVPAVLDLFVEKLKSLEAIRVDTVKPLFKQITKETKLGGKQVFMPIRIALTGQMHGPELYDIVPLLGLENVLSRLAGTKALLAGSR.

Positions 8–18 (PSPTGPLHIGG) match the 'HIGH' region motif. Zn(2+) contacts are provided by C105, C107, C132, and H134. The 'KMSKS' region motif lies at 249–253 (KMSKR). Position 252 (K252) interacts with ATP.

It belongs to the class-I aminoacyl-tRNA synthetase family. Glutamate--tRNA ligase type 1 subfamily. In terms of assembly, monomer. It depends on Zn(2+) as a cofactor.

The protein resides in the cytoplasm. The catalysed reaction is tRNA(Glu) + L-glutamate + ATP = L-glutamyl-tRNA(Glu) + AMP + diphosphate. In terms of biological role, catalyzes the attachment of glutamate to tRNA(Glu) in a two-step reaction: glutamate is first activated by ATP to form Glu-AMP and then transferred to the acceptor end of tRNA(Glu). The protein is Glutamate--tRNA ligase of Desulfitobacterium hafniense (strain Y51).